The following is an 87-amino-acid chain: Small ribosomal subunit protein uS17 (87 aa).

This sequence belongs to the universal ribosomal protein uS17 family. Part of the 30S ribosomal subunit.

In terms of biological role, one of the primary rRNA binding proteins, it binds specifically to the 5'-end of 16S ribosomal RNA. The polypeptide is Small ribosomal subunit protein uS17 (Thioalkalivibrio sulfidiphilus (strain HL-EbGR7)).